Reading from the N-terminus, the 541-residue chain is Protein ST7 homolog (541 aa).

A helical transmembrane segment spans residues 15–35 (FYVALTGTSSLISGLILIFEW). The tract at residues 62–116 (DAQSDSSNGSGSSTSSGSSSSSNGGGGGGGGGAGGGGPGAGGGTNSTTTTGTQMP) is disordered. Over residues 67–83 (SSNGSGSSTSSGSSSSS) the composition is skewed to low complexity. The segment covering 84–105 (NGGGGGGGGGAGGGGPGAGGGT) has biased composition (gly residues). The chain crosses the membrane as a helical span at residues 476–496 (LPFFILFTAGLCSFTALLALL).

It belongs to the ST7 family.

It localises to the membrane. This Drosophila pseudoobscura pseudoobscura (Fruit fly) protein is Protein ST7 homolog.